The following is a 361-amino-acid chain: Outer mitochondrial transmembrane helix translocase (361 aa).

The Mitochondrial intermembrane segment spans residues 1–15 (MVHAETFSRPLSRNE). A helical membrane pass occupies residues 16 to 32 (VVGLIFRLTIFGAVTYF). Residues 33-361 (TIKWMVDAID…QNVLTHVCLD (329 aa)) are Cytoplasmic-facing. 133-140 (GPPGCGKT) lines the ATP pocket. Phosphoserine is present on S322.

It belongs to the AAA ATPase family. MSP1 subfamily. As to quaternary structure, interacts with GRIA2 and GRIP1 in an ATP-dependent manner. ATAD1-catalyzed ATP hydrolysis disrupts not only its binding to GRIA2 and GRIP1, but also interaction between GRIP1 and GRIA2, leading to AMPAR complex disassembly.

The protein resides in the mitochondrion outer membrane. It localises to the peroxisome membrane. Its subcellular location is the postsynaptic cell membrane. It carries out the reaction [protein]-with a C-terminal TM segment(out) + ATP + H2O = [protein]-with a C-terminal TM segment(in) + ADP + phosphate + H(+). Outer mitochondrial translocase required to remove mislocalized tail-anchored transmembrane proteins on mitochondria. Specifically recognizes and binds tail-anchored transmembrane proteins: acts as a dislocase that mediates the ATP-dependent extraction of mistargeted tail-anchored transmembrane proteins from the mitochondrion outer membrane. Also plays a critical role in regulating the surface expression of AMPA receptors (AMPAR), thereby regulating synaptic plasticity and learning and memory. Required for NMDA-stimulated AMPAR internalization and inhibition of GRIA1 and GRIA2 recycling back to the plasma membrane; these activities are ATPase-dependent. The protein is Outer mitochondrial transmembrane helix translocase of Bos taurus (Bovine).